The primary structure comprises 308 residues: Phosphate transport system permease protein PstA 1 (308 aa).

6 helical membrane-spanning segments follow: residues 36 to 56 (FFFT…WVVI), 96 to 116 (AGVA…YLVE), 132 to 152 (VLAG…WIAT), 155 to 175 (FQQS…PVVV), 204 to 224 (IVRI…LLSI), and 276 to 296 (WGAA…AAMI). An ABC transmembrane type-1 domain is found at 89–297 (LYGTLVQAGV…TINLAAAMIR (209 aa)).

Belongs to the binding-protein-dependent transport system permease family. CysTW subfamily. As to quaternary structure, the complex is composed of two ATP-binding proteins (PstB), two transmembrane proteins (PstC and PstA) and a solute-binding protein (PstS).

The protein localises to the cell membrane. In terms of biological role, part of the binding-protein-dependent transport system for phosphate; probably responsible for the translocation of the substrate across the membrane. In Mycobacterium tuberculosis (strain ATCC 25618 / H37Rv), this protein is Phosphate transport system permease protein PstA 1 (pstA1).